A 353-amino-acid chain; its full sequence is UPF0283 membrane protein YcjF (353 aa).

3 helical membrane-spanning segments follow: residues 70–90 (MVMG…IQWT), 100–120 (VALG…GSVV), and 213–233 (ESTL…FIAW).

Belongs to the UPF0283 family.

It is found in the cell inner membrane. In Shigella flexneri serotype 5b (strain 8401), this protein is UPF0283 membrane protein YcjF.